The primary structure comprises 227 residues: NAD(P)H-hydrate epimerase (227 aa).

The YjeF N-terminal domain occupies 10–227 (MRALETAAFN…GKIMVQYIGL (218 aa)). 62–66 (NNGGD) provides a ligand contact to (6S)-NADPHX. 2 residues coordinate K(+): N63 and D142. (6S)-NADPHX contacts are provided by residues 146-152 (GIGLNRP) and D176. Position 179 (S179) interacts with K(+).

It belongs to the NnrE/AIBP family. Requires K(+) as cofactor.

The enzyme catalyses (6R)-NADHX = (6S)-NADHX. It catalyses the reaction (6R)-NADPHX = (6S)-NADPHX. Catalyzes the epimerization of the S- and R-forms of NAD(P)HX, a damaged form of NAD(P)H that is a result of enzymatic or heat-dependent hydration. This is a prerequisite for the S-specific NAD(P)H-hydrate dehydratase to allow the repair of both epimers of NAD(P)HX. The polypeptide is NAD(P)H-hydrate epimerase (Roseobacter litoralis (strain ATCC 49566 / DSM 6996 / JCM 21268 / NBRC 15278 / OCh 149)).